We begin with the raw amino-acid sequence, 156 residues long: E3 ubiquitin-protein ligase RNF181 (156 aa).

An RING-type; atypical zinc finger spans residues 79–120 (CPVCLLEFEEGETVRQLPCEHLFHSSCILPWLGKTNSCPLCR).

Belongs to the RNF181 family.

It catalyses the reaction S-ubiquitinyl-[E2 ubiquitin-conjugating enzyme]-L-cysteine + [acceptor protein]-L-lysine = [E2 ubiquitin-conjugating enzyme]-L-cysteine + N(6)-ubiquitinyl-[acceptor protein]-L-lysine.. It participates in protein modification; protein ubiquitination. In terms of biological role, E3 ubiquitin-protein ligase which accepts ubiquitin from an E2 ubiquitin-conjugating enzyme in the form of a thioester and then directly transfers the ubiquitin to targeted substrates. Catalyzes monoubiquitination of 26S proteasome subunit PSMC2/RPT1. The sequence is that of E3 ubiquitin-protein ligase RNF181 (rnf181) from Xenopus tropicalis (Western clawed frog).